The primary structure comprises 82 residues: Conotoxin MiK42 (82 aa).

An N-terminal signal peptide occupies residues 1–22 (MKLTCALIVAMLLLTACQLITT). Residues 23 to 49 (DDFRGRQQYRTARSRTKMQNYKIFRLT) constitute a propeptide that is removed on maturation. 3 cysteine pairs are disulfide-bonded: Cys52/Cys67, Cys59/Cys70, and Cys66/Cys80.

The protein belongs to the conotoxin O1 superfamily. As to expression, expressed by the venom duct.

Its subcellular location is the secreted. In Conus miles (Soldier cone), this protein is Conotoxin MiK42.